A 310-amino-acid chain; its full sequence is Methionyl-tRNA formyltransferase (310 aa).

109–112 (SLLP) serves as a coordination point for (6S)-5,6,7,8-tetrahydrofolate.

The protein belongs to the Fmt family.

It carries out the reaction L-methionyl-tRNA(fMet) + (6R)-10-formyltetrahydrofolate = N-formyl-L-methionyl-tRNA(fMet) + (6S)-5,6,7,8-tetrahydrofolate + H(+). In terms of biological role, attaches a formyl group to the free amino group of methionyl-tRNA(fMet). The formyl group appears to play a dual role in the initiator identity of N-formylmethionyl-tRNA by promoting its recognition by IF2 and preventing the misappropriation of this tRNA by the elongation apparatus. The chain is Methionyl-tRNA formyltransferase from Pseudomonas putida (strain ATCC 47054 / DSM 6125 / CFBP 8728 / NCIMB 11950 / KT2440).